The chain runs to 547 residues: Threonine synthase (547 aa).

Position 117 is an N6-(pyridoxal phosphate)lysine (Lys-117). Positions 272, 273, 274, 276, and 471 each coordinate pyridoxal 5'-phosphate.

It belongs to the threonine synthase family. It depends on pyridoxal 5'-phosphate as a cofactor.

The catalysed reaction is O-phospho-L-homoserine + H2O = L-threonine + phosphate. It participates in amino-acid biosynthesis; L-threonine biosynthesis; L-threonine from L-aspartate: step 5/5. Functionally, catalyzes the gamma-elimination of phosphate from L-phosphohomoserine and the beta-addition of water to produce L-threonine. This Cryptococcus neoformans var. grubii serotype A (strain H99 / ATCC 208821 / CBS 10515 / FGSC 9487) (Filobasidiella neoformans var. grubii) protein is Threonine synthase.